Here is a 124-residue protein sequence, read N- to C-terminus: uncharacterized protein (124 aa).

The protein resides in the cytoplasm. Its subcellular location is the nucleus. This is an uncharacterized protein from Schizosaccharomyces pombe (strain 972 / ATCC 24843) (Fission yeast).